A 281-amino-acid chain; its full sequence is CCAAT/enhancer-binding protein epsilon (281 aa).

The tract at residues 1-30 (MSHGTYYECEPRGGQQPLEFSGGRAGPGEL) is disordered. Lys121 participates in a covalent cross-link: Glycyl lysine isopeptide (Lys-Gly) (interchain with G-Cter in SUMO2). Position 181 is a phosphoserine (Ser181). Residues 204-267 (SLEYRLRRER…DTLRNLFRQI (64 aa)) enclose the bZIP domain. The basic motif stretch occupies residues 208-228 (RLRRERNNIAVRKSRDKAKRR). The tract at residues 230-237 (LETQQKVL) is leucine-zipper.

This sequence belongs to the bZIP family. C/EBP subfamily. Binds DNA as a homodimer and as a heterodimer. Can form stable heterodimers with CEBPA, CEBPB and CEBPD. Interacts with GATA1 and SPI1. Interacts with SMARCD2. Phosphorylated. As to expression, strongest expression occurs in promyelocyte and late-myeloblast-like cell lines.

Its subcellular location is the nucleus. In terms of biological role, transcriptional activator. C/EBP are DNA-binding proteins that recognize two different motifs: the CCAAT homology common to many promoters and the enhanced core homology common to many enhancers. Required for the promyelocyte-myelocyte transition in myeloid differentiation. This Homo sapiens (Human) protein is CCAAT/enhancer-binding protein epsilon (CEBPE).